The following is a 315-amino-acid chain: Homoserine kinase (315 aa).

Position 96–106 (96–106 (PHSRGLGSSAA)) interacts with ATP.

Belongs to the GHMP kinase family. Homoserine kinase subfamily.

It is found in the cytoplasm. It catalyses the reaction L-homoserine + ATP = O-phospho-L-homoserine + ADP + H(+). It participates in amino-acid biosynthesis; L-threonine biosynthesis; L-threonine from L-aspartate: step 4/5. Its function is as follows. Catalyzes the ATP-dependent phosphorylation of L-homoserine to L-homoserine phosphate. In Mycolicibacterium paratuberculosis (strain ATCC BAA-968 / K-10) (Mycobacterium paratuberculosis), this protein is Homoserine kinase.